Consider the following 66-residue polypeptide: Small vasohibin-binding protein (66 aa).

The segment covering 1 to 23 has biased composition (basic and acidic residues); the sequence is MDPPARKEKTKVKESVSRVEKAK. The segment at 1-31 is disordered; sequence MDPPARKEKTKVKESVSRVEKAKQKSAQQEL. Residues 5 to 52 are a coiled coil; sequence ARKEKTKVKESVSRVEKAKQKSAQQELKQRQRAEIYALNRVMTELEQQ.

It belongs to the SVBP family. As to quaternary structure, interacts with VASH1 and VASH2.

It is found in the cytoplasm. The protein localises to the secreted. The protein resides in the cytoskeleton. Enhances the tyrosine carboxypeptidase activity of VASH1 and VASH2, thereby promoting the removal of the C-terminal tyrosine residue of alpha-tubulin. This activity is critical for spindle function and accurate chromosome segregation during mitosis since microtubule detyronisation regulates mitotic spindle length and postioning. Also required to enhance the solubility and secretion of VASH1 and VASH2. Plays a role in axon and excitatory synapse formation. This Homo sapiens (Human) protein is Small vasohibin-binding protein.